A 504-amino-acid chain; its full sequence is MSIKAEEISSIIKQQIENYQSELKVSDVGTVTYIGDGIARAHGLDNAMAGELLEFSNGVMGMAQNLETNDVGIIILGPYTEIREGDEVRRTGKIMEVPVGEALIGRVVNSLGQPVDGLGPIETTGTRPIEAVAPGVMQRQSVNEPLQTGIKAIDALVPIGRGQRELIIGDRQTGKTSVAIDTILNQADQDMICIYVAIGQKESTVRNAVETLRHHGALDYTIVVTAAASQPAPLLYLAPYAGVAMAEEFMYSGKHVLVVYDDLSKQAAAYRELSLLLRRPPGREAYPGDVFYLHSRLLERAAKLNDSLGGGSITALPFVETQAGDISAYIPTNVISITDGQIFLQSDLFFSGVRPAINAGLSVSRVGGSAQIKAMKTVAGTLRLDLAAYRELESFSQFGSDLDAATRAKLERGKRTVEVLKQDLHKPLKVEKQVLILYALVHKYLDDVPVHDVLRFESEMNTWFDHNHPELLEEIRTTKKLPDEAKLEAALKEFKNTFVPSEEK.

An ATP-binding site is contributed by Gly-169–Thr-176.

This sequence belongs to the ATPase alpha/beta chains family. As to quaternary structure, F-type ATPases have 2 components, CF(1) - the catalytic core - and CF(0) - the membrane proton channel. CF(1) has five subunits: alpha(3), beta(3), gamma(1), delta(1), epsilon(1). CF(0) has three main subunits: a(1), b(2) and c(9-12). The alpha and beta chains form an alternating ring which encloses part of the gamma chain. CF(1) is attached to CF(0) by a central stalk formed by the gamma and epsilon chains, while a peripheral stalk is formed by the delta and b chains.

It localises to the cell membrane. The enzyme catalyses ATP + H2O + 4 H(+)(in) = ADP + phosphate + 5 H(+)(out). Produces ATP from ADP in the presence of a proton gradient across the membrane. The alpha chain is a regulatory subunit. In Listeria innocua serovar 6a (strain ATCC BAA-680 / CLIP 11262), this protein is ATP synthase subunit alpha 2.